We begin with the raw amino-acid sequence, 544 residues long: POTE ankyrin domain family member B2 (544 aa).

5 ANK repeats span residues 135 to 167 (QKRT…VLDN), 168 to 200 (KKRT…IQDE), 201 to 233 (YGNT…SKNK), 234 to 266 (CGLT…ALDR), and 267 to 299 (YGRT…SQDL). The interval 332–457 (SSENSNPEQD…NTGISQDEIL (126 aa)) is disordered. Composition is skewed to basic and acidic residues over residues 340-355 (QDLK…RLKV) and 364-375 (MSQEPEINKDCD). Residues 439-457 (TQKQLSEEQNTGISQDEIL) show a composition bias toward polar residues.

The protein belongs to the POTE family.

The chain is POTE ankyrin domain family member B2 (POTEB2) from Homo sapiens (Human).